The chain runs to 238 residues: tRNA (guanine-N(7)-)-methyltransferase (238 aa).

Residues E68, E93, D120, and D143 each contribute to the S-adenosyl-L-methionine site. Residue D143 is part of the active site. Substrate-binding positions include K147, D179, and 216 to 219 (TKFE).

Belongs to the class I-like SAM-binding methyltransferase superfamily. TrmB family.

The enzyme catalyses guanosine(46) in tRNA + S-adenosyl-L-methionine = N(7)-methylguanosine(46) in tRNA + S-adenosyl-L-homocysteine. Its pathway is tRNA modification; N(7)-methylguanine-tRNA biosynthesis. Functionally, catalyzes the formation of N(7)-methylguanine at position 46 (m7G46) in tRNA. The sequence is that of tRNA (guanine-N(7)-)-methyltransferase from Shewanella sp. (strain W3-18-1).